The primary structure comprises 294 residues: HTH-type transcriptional regulator TcbR (294 aa).

In terms of domain architecture, HTH lysR-type spans 1-58; sequence MEFRQLKYFIAVAEAGNMAAAAKRLHVSQPPITRQMQALEADLGVVLLERSHRGIELT. A DNA-binding region (H-T-H motif) is located at residues 18–37; sequence MAAAAKRLHVSQPPITRQMQ.

The protein belongs to the LysR transcriptional regulatory family.

Its function is as follows. Involved in regulation of chlorinated catechol metabolism. Transcriptional activator of the tcbCDEF chlorocatechol oxidative operon. May bind 2-chloromuconate as an inducer. The polypeptide is HTH-type transcriptional regulator TcbR (tcbR) (Pseudomonas sp. (strain P51)).